A 944-amino-acid chain; its full sequence is Translation factor GUF1 homolog, mitochondrial (944 aa).

Residues 201-379 form the tr-type G domain; the sequence is KNVRNFCILA…IITDIPYPPI (179 aa). Residues 210–217, 271–275, and 325–328 contribute to the GTP site; these read AHIDSGKS, DTPGH, and NKID.

Belongs to the TRAFAC class translation factor GTPase superfamily. Classic translation factor GTPase family. LepA subfamily.

It localises to the mitochondrion inner membrane. The catalysed reaction is GTP + H2O = GDP + phosphate + H(+). In terms of biological role, promotes mitochondrial protein synthesis. May act as a fidelity factor of the translation reaction, by catalyzing a one-codon backward translocation of tRNAs on improperly translocated ribosomes. Binds to mitochondrial ribosomes in a GTP-dependent manner. The protein is Translation factor GUF1 homolog, mitochondrial of Plasmodium yoelii yoelii.